Consider the following 488-residue polypeptide: Katanin p60 ATPase-containing subunit A-like 1 (488 aa).

Residues 84 to 184 (FPNPVPEEGP…EQKKFDGTGY (101 aa)) form a disordered region. Over residues 144 to 167 (KPDRPNTRDGRGNKAKEEKSKRNA) the composition is skewed to basic and acidic residues. 246–253 (GPPGTGKT) serves as a coordination point for ATP.

Belongs to the AAA ATPase family. Katanin p60 subunit A1 subfamily. A-like 1 sub-subfamily.

Its subcellular location is the cytoplasm. It localises to the cytoskeleton. The protein resides in the spindle pole. It is found in the spindle. The enzyme catalyses n ATP + n H2O + a microtubule = n ADP + n phosphate + (n+1) alpha/beta tubulin heterodimers.. In terms of biological role, regulates microtubule dynamics in Sertoli cells, a process that is essential for spermiogenesis and male fertility. Severs microtubules in an ATP-dependent manner, promoting rapid reorganization of cellular microtubule arrays. The protein is Katanin p60 ATPase-containing subunit A-like 1 (katnal1) of Danio rerio (Zebrafish).